A 202-amino-acid chain; its full sequence is FMN-dependent NADH:quinone oxidoreductase 1 (202 aa).

FMN is bound by residues S9, 15–17, 95–98, and 139–142; these read SAS, MYNF, and TSGG.

Belongs to the azoreductase type 1 family. As to quaternary structure, homodimer. The cofactor is FMN.

The enzyme catalyses 2 a quinone + NADH + H(+) = 2 a 1,4-benzosemiquinone + NAD(+). It catalyses the reaction N,N-dimethyl-1,4-phenylenediamine + anthranilate + 2 NAD(+) = 2-(4-dimethylaminophenyl)diazenylbenzoate + 2 NADH + 2 H(+). Its function is as follows. Quinone reductase that provides resistance to thiol-specific stress caused by electrophilic quinones. Also exhibits azoreductase activity. Catalyzes the reductive cleavage of the azo bond in aromatic azo compounds to the corresponding amines. This Pseudomonas syringae pv. tomato (strain ATCC BAA-871 / DC3000) protein is FMN-dependent NADH:quinone oxidoreductase 1.